The primary structure comprises 254 residues: Ribonuclease HII (254 aa).

The RNase H type-2 domain occupies 46-234; that stretch reads KLIAGIDEVG…VWMASAPQEV (189 aa). A divalent metal cation-binding residues include D52, E53, and D144.

The protein belongs to the RNase HII family. Mn(2+) is required as a cofactor. It depends on Mg(2+) as a cofactor.

Its subcellular location is the cytoplasm. The enzyme catalyses Endonucleolytic cleavage to 5'-phosphomonoester.. Functionally, endonuclease that specifically degrades the RNA of RNA-DNA hybrids. This Koribacter versatilis (strain Ellin345) protein is Ribonuclease HII.